The sequence spans 527 residues: MTMTSLDIILFISAIVFLSIYYYNLFSNAKRSNGLKLPPGPKGYPVLGNLPQLGAKPHQALQAFSRVYGPLMRLRLGSVDLVVASSPSVAAQFLKNDSNFCARPPNSGAEHMAFNYHDLVFAPYGPRWRLLRKLSAVHLLGPKALDDNQNVREEELAVLARMLYERSRGGEPVNVGKEMHVCSTNALSRAMMGRRVFEKLAVGGGGVEEEEEMKKAEEFKDMVVEVMTLAGVFNIGDFVPWLKPFDIQGVVRKMKRVHRRYNVFLDKFIAECRSSAKPGANDLLSVLIGQRGKSDGSGGEITDTAIKALVLNLLTAGTDTSSSTIEWALTELIRHPDILKKAQQEIDSAVGRDRLVTESDVPKLPYLQAIVKENFRMHPATPLSLPRMSIEECDIGGYHIPKNSTLFVNIWAMGRDPSIWPDPMEFRPSRFLPGGQGEHLEVRGNHFELMPFGAGRRICAGTSMGIRVVHSTVATLIHAFDWKLPEGLTAEKIDMEEAFGISLQKAIPLMAHPIPRLAPKAYSPKMK.

The helical transmembrane segment at 6–26 (LDIILFISAIVFLSIYYYNLF) threads the bilayer. Cysteine 459 contacts heme.

Belongs to the cytochrome P450 family. Requires heme as cofactor. Expressed in young cromes.

The protein localises to the membrane. The catalysed reaction is a 3',5'-unsubstituted flavanone + 2 reduced [NADPH--hemoprotein reductase] + 2 O2 = a 3',5'-dihydroxyflavanone + 2 oxidized [NADPH--hemoprotein reductase] + 2 H2O + 2 H(+). The enzyme catalyses (2S)-naringenin + 2 reduced [NADPH--hemoprotein reductase] + 2 O2 = (2S)-dihydrotricetin + 2 oxidized [NADPH--hemoprotein reductase] + 2 H2O + 2 H(+). It carries out the reaction (2R,3R)-dihydrokaempferol + 2 reduced [NADPH--hemoprotein reductase] + 2 O2 = (2R,3R)-dihydromyricetin + 2 oxidized [NADPH--hemoprotein reductase] + 2 H2O + 2 H(+). It catalyses the reaction kaempferol + 2 reduced [NADPH--hemoprotein reductase] + 2 O2 = myricetin + 2 oxidized [NADPH--hemoprotein reductase] + 2 H2O + 2 H(+). It participates in flavonoid metabolism. Functionally, flavonoid 3',5'-hydroxylase that catalyzes the 3'- and 5'-hydroxylation of flavanones, dihydroflavonols and flavonols. Converts narigenin to dihydrotricetin, dihydrokaempferol to dihydromyricetin and kaempferol to myricetin. The polypeptide is Flavonoid 3',5'-hydroxylase CYP75B138 (Crocosmia x crocosmiiflora (Montbretia)).